The following is a 390-amino-acid chain: GTPase Obg (390 aa).

Residues Met1–Leu159 form the Obg domain. The region spanning Ala160–Ile333 is the OBG-type G domain. Residues Gly166–Ser173, Phe191–Val195, Asp213–Gly216, Asn283–Asp286, and Ser314–Ala316 contribute to the GTP site. Mg(2+)-binding residues include Ser173 and Thr193.

This sequence belongs to the TRAFAC class OBG-HflX-like GTPase superfamily. OBG GTPase family. As to quaternary structure, monomer. Requires Mg(2+) as cofactor.

It localises to the cytoplasm. Its function is as follows. An essential GTPase which binds GTP, GDP and possibly (p)ppGpp with moderate affinity, with high nucleotide exchange rates and a fairly low GTP hydrolysis rate. Plays a role in control of the cell cycle, stress response, ribosome biogenesis and in those bacteria that undergo differentiation, in morphogenesis control. This chain is GTPase Obg, found in Haemophilus influenzae (strain 86-028NP).